The primary structure comprises 471 residues: Trigger factor (471 aa).

The region spanning 169 to 264 (GDVAVVDFKG…LKEIKEKELP (96 aa)) is the PPIase FKBP-type domain. The interval 443–471 (SLASQESEITAPETEAETIEVTAESTTGE) is disordered. Over residues 448–471 (ESEITAPETEAETIEVTAESTTGE) the composition is skewed to low complexity.

This sequence belongs to the FKBP-type PPIase family. Tig subfamily.

Its subcellular location is the cytoplasm. The catalysed reaction is [protein]-peptidylproline (omega=180) = [protein]-peptidylproline (omega=0). In terms of biological role, involved in protein export. Acts as a chaperone by maintaining the newly synthesized protein in an open conformation. Functions as a peptidyl-prolyl cis-trans isomerase. This is Trigger factor from Trichormus variabilis (strain ATCC 29413 / PCC 7937) (Anabaena variabilis).